A 520-amino-acid chain; its full sequence is Ribonuclease Y 2 (520 aa).

A helical membrane pass occupies residues 7-23 (VVLLLASIGVGYGLRAK). The KH domain occupies 206–269 (NHRSFIAENA…AVAMETMEMI (64 aa)). Residues 332-425 (ILEHSIETAK…VEAADAISGA (94 aa)) enclose the HD domain.

The protein belongs to the RNase Y family.

It is found in the cell membrane. Endoribonuclease that initiates mRNA decay. The protein is Ribonuclease Y 2 of Pediococcus pentosaceus (strain ATCC 25745 / CCUG 21536 / LMG 10740 / 183-1w).